A 207-amino-acid polypeptide reads, in one-letter code: Peptidyl-tRNA hydrolase (207 aa).

Y14 contributes to the tRNA binding site. H19 functions as the Proton acceptor in the catalytic mechanism. Residues F68, N70, and N116 each contribute to the tRNA site.

This sequence belongs to the PTH family. In terms of assembly, monomer.

The protein resides in the cytoplasm. It carries out the reaction an N-acyl-L-alpha-aminoacyl-tRNA + H2O = an N-acyl-L-amino acid + a tRNA + H(+). In terms of biological role, hydrolyzes ribosome-free peptidyl-tRNAs (with 1 or more amino acids incorporated), which drop off the ribosome during protein synthesis, or as a result of ribosome stalling. Functionally, catalyzes the release of premature peptidyl moieties from peptidyl-tRNA molecules trapped in stalled 50S ribosomal subunits, and thus maintains levels of free tRNAs and 50S ribosomes. The chain is Peptidyl-tRNA hydrolase from Hyphomonas neptunium (strain ATCC 15444).